The following is a 174-amino-acid chain: Large ribosomal subunit protein uL10 (174 aa).

The protein belongs to the universal ribosomal protein uL10 family. Part of the ribosomal stalk of the 50S ribosomal subunit. The N-terminus interacts with L11 and the large rRNA to form the base of the stalk. The C-terminus forms an elongated spine to which L12 dimers bind in a sequential fashion forming a multimeric L10(L12)X complex.

Functionally, forms part of the ribosomal stalk, playing a central role in the interaction of the ribosome with GTP-bound translation factors. The protein is Large ribosomal subunit protein uL10 of Coxiella burnetii (strain CbuK_Q154) (Coxiella burnetii (strain Q154)).